We begin with the raw amino-acid sequence, 289 residues long: Urease accessory protein UreD (289 aa).

This sequence belongs to the UreD family. In terms of assembly, ureD, UreF and UreG form a complex that acts as a GTP-hydrolysis-dependent molecular chaperone, activating the urease apoprotein by helping to assemble the nickel containing metallocenter of UreC. The UreE protein probably delivers the nickel.

The protein localises to the cytoplasm. Functionally, required for maturation of urease via the functional incorporation of the urease nickel metallocenter. The chain is Urease accessory protein UreD from Magnetococcus marinus (strain ATCC BAA-1437 / JCM 17883 / MC-1).